The sequence spans 731 residues: Catalase-peroxidase (731 aa).

The segment at 1–24 (MSTEPNCPFSGNARKHTAAGAPSN) is disordered. The segment at residues 96–219 (WHSAGTYRVS…LGAVQMGLIY (124 aa)) is a cross-link (tryptophyl-tyrosyl-methioninium (Trp-Tyr) (with M-245)). Histidine 97 acts as the Proton acceptor in catalysis. Residues 219 to 245 (YVNPEGPNGNPDPIAAARDIRETFARM) constitute a cross-link (tryptophyl-tyrosyl-methioninium (Tyr-Met) (with W-96)). Histidine 260 contributes to the heme b binding site. Residues 339–365 (GAQQWKPKGDAGAGTVPDAHDPSKRHA) form a disordered region.

The protein belongs to the peroxidase family. Peroxidase/catalase subfamily. In terms of assembly, homodimer or homotetramer. Requires heme b as cofactor. Post-translationally, formation of the three residue Trp-Tyr-Met cross-link is important for the catalase, but not the peroxidase activity of the enzyme.

It carries out the reaction H2O2 + AH2 = A + 2 H2O. The catalysed reaction is 2 H2O2 = O2 + 2 H2O. Its function is as follows. Bifunctional enzyme with both catalase and broad-spectrum peroxidase activity. In Polaromonas sp. (strain JS666 / ATCC BAA-500), this protein is Catalase-peroxidase.